A 370-amino-acid polypeptide reads, in one-letter code: Polygalacturonase 1 (370 aa).

An N-terminal signal peptide occupies residues 1-18 (MRTSILSMLALGAAAVSA). A disulfide bridge connects residues C36 and C51. 5 PbH1 repeats span residues 163 to 194 (ADNL…DVGE), 195 to 216 (STYI…AINS), 217 to 237 (GENI…SIGS), 246 to 267 (VKNV…RIKT), and 275 to 297 (VADV…VIEQ). D209 (proton donor) is an active-site residue. Cysteines 211 and 227 form a disulfide. H231 is an active-site residue. Residue N248 is glycosylated (N-linked (GlcNAc...) asparagine). 2 disulfide bridges follow: C337-C342 and C361-C370.

It belongs to the glycosyl hydrolase 28 family.

The protein resides in the secreted. The enzyme catalyses (1,4-alpha-D-galacturonosyl)n+m + H2O = (1,4-alpha-D-galacturonosyl)n + (1,4-alpha-D-galacturonosyl)m.. The protein is Polygalacturonase 1 (PG1) of Penicillium olsonii.